The chain runs to 739 residues: Probable beta-glucosidase L (739 aa).

Residues 1–17 form the signal peptide; that stretch reads MQNLFLSLLAAAVTVHA. A glycan (N-linked (GlcNAc...) asparagine) is linked at Asn-224. Asp-252 is an active-site residue. A glycan (N-linked (GlcNAc...) asparagine) is linked at Asn-398.

It belongs to the glycosyl hydrolase 3 family.

It is found in the secreted. The catalysed reaction is Hydrolysis of terminal, non-reducing beta-D-glucosyl residues with release of beta-D-glucose.. The protein operates within glycan metabolism; cellulose degradation. Its function is as follows. Beta-glucosidases are one of a number of cellulolytic enzymes involved in the degradation of cellulosic biomass. Catalyzes the last step releasing glucose from the inhibitory cellobiose. The chain is Probable beta-glucosidase L (bglL) from Neosartorya fischeri (strain ATCC 1020 / DSM 3700 / CBS 544.65 / FGSC A1164 / JCM 1740 / NRRL 181 / WB 181) (Aspergillus fischerianus).